Consider the following 265-residue polypeptide: Capsule polysaccharide export inner-membrane protein CtrC (265 aa).

A run of 6 helical transmembrane segments spans residues 37–57 (IGFLWLFVEPLLLTLVMVLMW), 64–84 (NVSALNIVAFTLTGYPMMMMW), 121–141 (IAGATIAQVVIMFALVIIGWI), 147–167 (IFYMLLAWLLMAMFAVGLGLV), 178–198 (FGKVWSTISFVMMPLSGVFFF), and 236–256 (NPWYILLCNLVLLLLGLAVVA). In terms of domain architecture, ABC transmembrane type-2 spans 37–258 (IGFLWLFVEP…LLGLAVVARF (222 aa)).

This sequence belongs to the ABC-2 integral membrane protein family.

It is found in the cell inner membrane. May form an ATP-driven capsule polysaccharide export apparatus, in association with the CtrB and CtrD proteins. The chain is Capsule polysaccharide export inner-membrane protein CtrC (ctrC) from Neisseria meningitidis serogroup A / serotype 4A (strain DSM 15465 / Z2491).